The sequence spans 640 residues: MPIIALPDGNKKKFDQPVTIMEVAESLGPGLAKAAIAGRVNGVLLDTCIPIEKDSEVNIITAKDQDGIETIRHSFAHLIGHAVKQLYPEAKMAIGPVIEDGFYYDIAYDHPFTPKDLEAIEARMKELVKLDYDVNVEIVSKEEARKEFEKRCEPYKIEIVDEIPENEIIKLYRHQEYTDMCRGPHVPNTRHLRTFKLMKVSGAYWRGDSNKTMLQRIYGTAWGSSKELKAYLKRLEEAEKRDHRRIAKQMSLFHTQEEAPGMIFWHAKGWAIYQVLEQYIRETLSLHDYQEIRTPQVVDRSLWEKSGHWEKFKDDMFTTTSENREYAIKPMNCPCHVQIFNQGLKSYRDLPIRLAEFGSCLRNEPSGSLHGLMRVRNFVQDDAHIFCTELQVQEEVSKFIDLVFEVYRSFGFDSVLIKLSTRPEKRVGSDEIWDKSEKALSDALDAKGLAWDLLPGEGAFYGPKIEFSLKDCLGRVWQCGTIQVDFSMPERLGASYVAEDSQRRTPVMLHRAILGSFERFIGILIEHYAGRLPIWLAPVQVVVMGITDRNAQACQDICKKLSALEYRTEVDLRNEKIGFKVREHTLQRVPFLIIIGDKEQQSGEVAVRTREGKDFGSMPLKGFTSLLDEAIALKGRSGVS.

In terms of domain architecture, TGS spans 1 to 61; it reads MPIIALPDGN…EKDSEVNIIT (61 aa). The interval 242–533 is catalytic; the sequence is DHRRIAKQMS…LIEHYAGRLP (292 aa). Residues cysteine 333, histidine 384, and histidine 510 each contribute to the Zn(2+) site.

It belongs to the class-II aminoacyl-tRNA synthetase family. In terms of assembly, homodimer. Zn(2+) serves as cofactor.

Its subcellular location is the cytoplasm. It carries out the reaction tRNA(Thr) + L-threonine + ATP = L-threonyl-tRNA(Thr) + AMP + diphosphate + H(+). In terms of biological role, catalyzes the attachment of threonine to tRNA(Thr) in a two-step reaction: L-threonine is first activated by ATP to form Thr-AMP and then transferred to the acceptor end of tRNA(Thr). Also edits incorrectly charged L-seryl-tRNA(Thr). The chain is Threonine--tRNA ligase from Prochlorococcus marinus (strain MIT 9313).